A 375-amino-acid chain; its full sequence is Growth/differentiation factor 8 (375 aa).

Residues 1–18 (MQKLQISVYIYLFMLIVA) form the signal peptide. The propeptide occupies 19-266 (GPVDLNENSE…VTDTPKRSRR (248 aa)). N-linked (GlcNAc...) asparagine glycosylation is found at asparagine 47 and asparagine 71. Intrachain disulfides connect cysteine 272/cysteine 282, cysteine 281/cysteine 340, cysteine 309/cysteine 372, and cysteine 313/cysteine 374.

The protein belongs to the TGF-beta family. In terms of assembly, homodimer; disulfide-linked. Interacts with WFIKKN2, leading to inhibit its activity. Interacts with FSTL3. Post-translationally, synthesized as large precursor molecule that undergoes proteolytic cleavage to generate an N-terminal propeptide and a disulfide linked C-terminal dimer, which is the biologically active molecule. The circulating form consists of a latent complex of the C-terminal dimer and other proteins, including its propeptide, which maintain the C-terminal dimer in a latent, inactive state. Ligand activation requires additional cleavage of the prodomain by a tolloid-like metalloproteinase.

The protein resides in the secreted. Its function is as follows. Acts specifically as a negative regulator of skeletal muscle growth. This is Growth/differentiation factor 8 (MSTN) from Bubalus bubalis (Domestic water buffalo).